A 121-amino-acid polypeptide reads, in one-letter code: Large ribosomal subunit protein bL19 (121 aa).

Belongs to the bacterial ribosomal protein bL19 family.

This protein is located at the 30S-50S ribosomal subunit interface and may play a role in the structure and function of the aminoacyl-tRNA binding site. This is Large ribosomal subunit protein bL19 from Neisseria meningitidis serogroup C (strain 053442).